The following is a 328-amino-acid chain: Organic solute transporter alpha-like protein (328 aa).

The Extracellular portion of the chain corresponds to 1 to 44; it reads MNASENYFTMDPTENISQVLDQNRNNTNSLRTHPTVEEYYENMT. N-linked (GlcNAc...) asparagine glycans are attached at residues Asn-2, Asn-15, Asn-25, and Asn-42. The helical transmembrane segment at 45 to 65 threads the bilayer; sequence AFLSLAIFIASLLTILNISIF. The Cytoplasmic portion of the chain corresponds to 66-84; sequence ATTVSRLRRHLDKPLLGPS. A helical membrane pass occupies residues 85-105; it reads IMMVGLYPIISVAALVTILVP. Tyr-106 is a topological domain (extracellular). A helical membrane pass occupies residues 107–127; that stretch reads SWFICHTVMHVMFMVGGPVFR. Topologically, residues 128-177 are cytoplasmic; that stretch reads TLLFRYVGSEQNYVKETAGEAVQLNTPPCCCCCLCLPMVIPTKAKLCISR. A helical membrane pass occupies residues 178–198; the sequence is YMVWQMPFWQGSIMLVMNILY. Topologically, residues 199-208 are extracellular; sequence YRDIQLYRQV. A helical membrane pass occupies residues 209-229; the sequence is MFFFIPFIVCSIVLGAWSLQI. Topologically, residues 230–247 are cytoplasmic; that stretch reads TVRMITKVRGDYQLRKKM. A helical transmembrane segment spans residues 248-265; that stretch reads FCLQLVVMLCKLQYLVLY. Residues 266–287 are Extracellular-facing; sequence DQLDGIKMGGEYPINHTVYKQT. A glycan (N-linked (GlcNAc...) asparagine) is linked at Asn-280. A helical transmembrane segment spans residues 288 to 308; that stretch reads IINILILVEMVLVSMMVQSAY. Over 309-328 the chain is Cytoplasmic; it reads RTPVQVQIDEVNKEKEVTRI.

This sequence belongs to the OST-alpha family.

Its subcellular location is the cell membrane. In terms of biological role, probable transporter. This is Organic solute transporter alpha-like protein from Drosophila melanogaster (Fruit fly).